A 210-amino-acid polypeptide reads, in one-letter code: Large ribosomal subunit protein uL3 (210 aa).

It belongs to the universal ribosomal protein uL3 family. Part of the 50S ribosomal subunit. Forms a cluster with proteins L14 and L19.

Functionally, one of the primary rRNA binding proteins, it binds directly near the 3'-end of the 23S rRNA, where it nucleates assembly of the 50S subunit. The chain is Large ribosomal subunit protein uL3 from Geobacter metallireducens (strain ATCC 53774 / DSM 7210 / GS-15).